The sequence spans 287 residues: Uroplakin-3a (287 aa).

Positions M1–T18 are cleaved as a signal peptide. The Lumenal portion of the chain corresponds to V19–G207. 3 N-linked (GlcNAc...) asparagine glycosylation sites follow: N74, N139, and N170. A helical transmembrane segment spans residues M208–V235. The Cytoplasmic segment spans residues D236–D287. The interval E243 to D287 is disordered. Over residues L259 to N270 the composition is skewed to polar residues.

The protein belongs to the uroplakin-3 family. As to quaternary structure, heterodimer with uroplakin-1B (UPK1B).

The protein resides in the endoplasmic reticulum membrane. Its function is as follows. Component of the asymmetric unit membrane (AUM); a highly specialized biomembrane elaborated by terminally differentiated urothelial cells. May play an important role in AUM-cytoskeleton interaction in terminally differentiated urothelial cells. It also contributes to the formation of urothelial glycocalyx which may play an important role in preventing bacterial adherence. The chain is Uroplakin-3a (Upk3a) from Mus musculus (Mouse).